The following is a 295-amino-acid chain: Nucleotide-binding protein BPUM_3115 (295 aa).

16–23 (GMSGAGKT) is an ATP binding site. 67 to 70 (DLRG) serves as a coordination point for GTP.

Belongs to the RapZ-like family.

Functionally, displays ATPase and GTPase activities. The chain is Nucleotide-binding protein BPUM_3115 from Bacillus pumilus (strain SAFR-032).